The primary structure comprises 377 residues: tRNA-specific 2-thiouridylase MnmA (377 aa).

ATP-binding positions include 12 to 19 and methionine 38; that span reads GMSGGVDS. The interval 98–100 is interaction with target base in tRNA; sequence NPD. Catalysis depends on cysteine 103, which acts as the Nucleophile. A disulfide bridge connects residues cysteine 103 and cysteine 200. Position 127 (glycine 127) interacts with ATP. The tract at residues 150-152 is interaction with tRNA; it reads KDQ. The active-site Cysteine persulfide intermediate is cysteine 200. Positions 314 to 315 are interaction with tRNA; that stretch reads RY.

The protein belongs to the MnmA/TRMU family.

Its subcellular location is the cytoplasm. It catalyses the reaction S-sulfanyl-L-cysteinyl-[protein] + uridine(34) in tRNA + AH2 + ATP = 2-thiouridine(34) in tRNA + L-cysteinyl-[protein] + A + AMP + diphosphate + H(+). In terms of biological role, catalyzes the 2-thiolation of uridine at the wobble position (U34) of tRNA, leading to the formation of s(2)U34. The sequence is that of tRNA-specific 2-thiouridylase MnmA from Limosilactobacillus fermentum (strain NBRC 3956 / LMG 18251) (Lactobacillus fermentum).